The following is a 274-amino-acid chain: Large ribosomal subunit protein uL2cz (274 aa).

Disordered stretches follow at residues 1–25 (MAIH…VKSN) and 224–274 (NPVD…RRSK). A compositionally biased stretch (polar residues) spans 7–25 (KTSTPSTRNGTVDSQVKSN).

It belongs to the universal ribosomal protein uL2 family. Part of the 50S ribosomal subunit.

Its subcellular location is the plastid. The protein localises to the chloroplast. This is Large ribosomal subunit protein uL2cz (rpl2-A) from Coffea arabica (Arabian coffee).